The following is a 345-amino-acid chain: DNA-directed RNA polymerase subunit alpha (345 aa).

The alpha N-terminal domain (alpha-NTD) stretch occupies residues 1–233 (MVRNWCSLIR…KQLQVFVGLH (233 aa)). The tract at residues 256–345 (LNDILLRHVE…EEMGEIQEEG (90 aa)) is alpha C-terminal domain (alpha-CTD).

It belongs to the RNA polymerase alpha chain family. Homodimer. The RNAP catalytic core consists of 2 alpha, 1 beta, 1 beta' and 1 omega subunit. When a sigma factor is associated with the core the holoenzyme is formed, which can initiate transcription.

The enzyme catalyses RNA(n) + a ribonucleoside 5'-triphosphate = RNA(n+1) + diphosphate. DNA-dependent RNA polymerase catalyzes the transcription of DNA into RNA using the four ribonucleoside triphosphates as substrates. This Syntrophus aciditrophicus (strain SB) protein is DNA-directed RNA polymerase subunit alpha.